A 300-amino-acid polypeptide reads, in one-letter code: Acetylglutamate kinase (300 aa).

Substrate contacts are provided by residues 68–69 (GG), Arg90, and Asn194.

It belongs to the acetylglutamate kinase family. ArgB subfamily.

The protein resides in the cytoplasm. The catalysed reaction is N-acetyl-L-glutamate + ATP = N-acetyl-L-glutamyl 5-phosphate + ADP. The protein operates within amino-acid biosynthesis; L-arginine biosynthesis; N(2)-acetyl-L-ornithine from L-glutamate: step 2/4. Its function is as follows. Catalyzes the ATP-dependent phosphorylation of N-acetyl-L-glutamate. The sequence is that of Acetylglutamate kinase from Methanocella arvoryzae (strain DSM 22066 / NBRC 105507 / MRE50).